A 280-amino-acid chain; its full sequence is tRNase Z TRZ1 (280 aa).

Belongs to the RNase Z family. Homodimer. It depends on Zn(2+) as a cofactor. Ca(2+) serves as cofactor. Mn(2+) is required as a cofactor. Requires Mg(2+) as cofactor.

The protein localises to the cytoplasm. The catalysed reaction is Endonucleolytic cleavage of RNA, removing extra 3' nucleotides from tRNA precursor, generating 3' termini of tRNAs. A 3'-hydroxy group is left at the tRNA terminus and a 5'-phosphoryl group is left at the trailer molecule.. Its function is as follows. Zinc phosphodiesterase, which displays tRNA 3'-processing endonuclease activity. Involved in tRNA maturation, by removing a 3'-trailer from precursor tRNA. Can use bis-(p-nitophenyl) phosphate (bpNPP) as substrate. Involved in the processing of small nucleolar RNAs (snoRNAs). In Arabidopsis thaliana (Mouse-ear cress), this protein is tRNase Z TRZ1.